The sequence spans 1261 residues: Apoptotic protease-activating factor 1 (1261 aa).

In terms of domain architecture, CARD spans Met-1–Asp-90. An NB-ARC domain is found at Val-106–Leu-417. An ATP-binding site is contributed by Gly-154–Ser-161. WD repeat units lie at residues Pro-615–Glu-654, Ala-657–Glu-696, Glu-700–Thr-743, Gly-746–Ser-785, Glu-798–Lys-836, Ser-840–Glu-879, Gly-882–Ala-921, Glu-964–Lys-1003, Gly-1006–Leu-1045, Gly-1047–Asp-1088, Cys-1091–Leu-1130, Gly-1133–Ile-1172, and Tyr-1184–Tyr-1223.

As to quaternary structure, monomer. Oligomerizes upon binding of cytochrome c and dATP.

It is found in the cytoplasm. In terms of biological role, oligomeric Apaf-1 mediates the cytochrome c-dependent autocatalytic activation of pro-caspase-9 (Apaf-3), leading to the activation of caspase-3 and apoptosis. This activation requires ATP. This is Apoptotic protease-activating factor 1 (apaf1) from Danio rerio (Zebrafish).